Here is a 64-residue protein sequence, read N- to C-terminus: Large ribosomal subunit protein bL35c (64 aa).

This sequence belongs to the bacterial ribosomal protein bL35 family.

It is found in the plastid. The protein resides in the chloroplast. This Cyanidium caldarium (Red alga) protein is Large ribosomal subunit protein bL35c.